Reading from the N-terminus, the 311-residue chain is MAVCLPDTQDDTPSIPIKLTRVGVTGVKKLLQLERNNKRPIILVPTFDAFVDLPNDQKGVHMSRNPEAISEVLDEVANDSSVEVETLCAKIVSKMMSKHEYAKRVEISMTTDYMFMKESPVTKNKTQEMAKLKAKAVGYREDGEIKIRKSIGAEVIGMTVCPCAQESVKESDKNKLLEFLDEETTQKVLDTVTFASHNQRGVGTLLIEVPEDREVKGEDIIEIIEESMSSPVCELLKRPDENATVLNAHKKPVFVEDCVRNMMEKIAKKYADFPEDTIITSRQENHESIHRHNAFAEKVTTMGELKEELRI.

It belongs to the GTP cyclohydrolase IV family. As to quaternary structure, homodimer. The cofactor is Fe(2+).

The catalysed reaction is GTP + H2O = 7,8-dihydroneopterin 2',3'-cyclic phosphate + formate + diphosphate + H(+). The protein operates within cofactor biosynthesis; 5,6,7,8-tetrahydromethanopterin biosynthesis. Converts GTP to 7,8-dihydro-D-neopterin 2',3'-cyclic phosphate, the first intermediate in the biosynthesis of coenzyme methanopterin. In Methanobrevibacter smithii (strain ATCC 35061 / DSM 861 / OCM 144 / PS), this protein is GTP cyclohydrolase MptA.